The sequence spans 94 residues: Acylphosphatase (94 aa).

In terms of domain architecture, Acylphosphatase-like spans 8–94 (TLFIIVHGKV…GRRFKHFAQH (87 aa)). Residues Arg23 and Asn41 contribute to the active site. A disordered region spans residues 69 to 94 (PPAASVTELESRREDGGRRFKHFAQH). Over residues 77-86 (LESRREDGGR) the composition is skewed to basic and acidic residues.

The protein belongs to the acylphosphatase family.

It catalyses the reaction an acyl phosphate + H2O = a carboxylate + phosphate + H(+). This chain is Acylphosphatase (acyP), found in Bordetella avium (strain 197N).